A 122-amino-acid chain; its full sequence is Large ribosomal subunit protein bL12 (122 aa).

It belongs to the bacterial ribosomal protein bL12 family. In terms of assembly, homodimer. Part of the ribosomal stalk of the 50S ribosomal subunit. Forms a multimeric L10(L12)X complex, where L10 forms an elongated spine to which 2 to 4 L12 dimers bind in a sequential fashion. Binds GTP-bound translation factors.

Forms part of the ribosomal stalk which helps the ribosome interact with GTP-bound translation factors. Is thus essential for accurate translation. This Yersinia enterocolitica serotype O:8 / biotype 1B (strain NCTC 13174 / 8081) protein is Large ribosomal subunit protein bL12.